A 152-amino-acid chain; its full sequence is MSQLCPCGSAVEYSLCCHPYVSGEKVAPDPEHLMRSRYCAFVMQDADYLIKTWHPSCGAAALRAELIAGFAHTEWLGLTVFEHCWQDADNIGFVSFVARFIEGGKTGAIIERSRFLKENGQWYYIDGTRPQFGRNDPCPCGSGKKIKKCCGQ.

The protein belongs to the UPF0225 family.

The chain is UPF0225 protein YchJ from Shigella dysenteriae serotype 1 (strain Sd197).